We begin with the raw amino-acid sequence, 163 residues long: MKGKAGGKAADAAEKVAASNRRARFDYDIEDTWEAGLVLTGSEVKSLREGNVNLSDAYAMPRGEELWLLNCRIGEYKQAAHFGHAPLRDRKLLMNRAEIDRVRGKVEQRGYTLVPLRIYFKQGWAKVELGLARGRSHEDRRGAIAERESKREMDRALARGRRR.

Basic and acidic residues predominate over residues 140–157 (RRGAIAERESKREMDRAL). The interval 140–163 (RRGAIAERESKREMDRALARGRRR) is disordered.

This sequence belongs to the SmpB family.

The protein resides in the cytoplasm. Required for rescue of stalled ribosomes mediated by trans-translation. Binds to transfer-messenger RNA (tmRNA), required for stable association of tmRNA with ribosomes. tmRNA and SmpB together mimic tRNA shape, replacing the anticodon stem-loop with SmpB. tmRNA is encoded by the ssrA gene; the 2 termini fold to resemble tRNA(Ala) and it encodes a 'tag peptide', a short internal open reading frame. During trans-translation Ala-aminoacylated tmRNA acts like a tRNA, entering the A-site of stalled ribosomes, displacing the stalled mRNA. The ribosome then switches to translate the ORF on the tmRNA; the nascent peptide is terminated with the 'tag peptide' encoded by the tmRNA and targeted for degradation. The ribosome is freed to recommence translation, which seems to be the essential function of trans-translation. The sequence is that of SsrA-binding protein from Anaeromyxobacter dehalogenans (strain 2CP-C).